Here is an 820-residue protein sequence, read N- to C-terminus: Probable ATP-dependent RNA helicase DDX23 (820 aa).

A compositionally biased stretch (basic and acidic residues) spans 1-42 (MAGELADKKDRDASPSKEERKRSRTPDRERDRDRDRKSSPSK). The tract at residues 1–244 (MAGELADKKD…QKIREEKDKS (244 aa)) is disordered. Residues Ser14 and Ser16 each carry the phosphoserine modification. The span at 43–65 (DRKRHRSRDRRRGGSRSRSRSRS) shows a compositional bias: basic residues. Over residues 66–105 (KSAERERRHKERERDKERDRNKKDRDRDKDGHRRDKDRKR) the composition is skewed to basic and acidic residues. Phosphoserine is present on residues Ser107 and Ser109. Composition is skewed to basic and acidic residues over residues 112-137 (RGKD…DKKP), 147-226 (LLAK…RETN), and 233-244 (GRQKIREEKDKS). The Q motif motif lies at 391–419 (RSWKDSSLPPHILEVIDKCGYKEPTPIQR). A Helicase ATP-binding domain is found at 422 to 627 (IPIGLQNRDI…RSYLRRPAVV (206 aa)). 435–442 (AETGSGKT) contacts ATP. The DEAD box signature appears at 549–552 (DEAD). The Helicase C-terminal domain maps to 651-799 (KRKKLLAILE…SCPPELANHP (149 aa)). Glycyl lysine isopeptide (Lys-Gly) (interchain with G-Cter in SUMO2) cross-links involve residues Lys686 and Lys811.

This sequence belongs to the DEAD box helicase family. DDX23/PRP28 subfamily. In terms of assembly, the phosphorylated form (by SRPK2) is a component of the U4/U6-U5 tri-snRNP complex composed of the U4, U6 and U5 snRNAs and at least PRPF3, PRPF4, PRPF6, PRPF8, PRPF31, SNRNP200, TXNL4A, WDR57, SNRNP40, DDX23, CD2BP2, PPIH, SNU13, EFTUD2, SART1 and USP39. Identified in the spliceosome C complex. Interacts with ERBB4. Interacts with ERCC6. In terms of processing, in vitro phosphorylated by CLK1 and U1 snRNP-associated protein kinase. Phosphorylated by SRPK2 and this phosphorylation is required for its association with the tri-snRNP (U4/U6-U5 tri-small nuclear ribonucleoproteins) and subsequent spliceosomal B complex formation. May be phosphorylated by SRPK2 on Ser residues in the SR domain; the phosphorylation is required for the removal of inappropriate R-loops during transcription.

It localises to the nucleus. Its subcellular location is the chromosome. The enzyme catalyses ATP + H2O = ADP + phosphate + H(+). In terms of biological role, involved in pre-mRNA splicing and its phosphorylated form (by SRPK2) is required for spliceosomal B complex formation. Independently of its spliceosome formation function, required for the suppression of incorrect R-loops formed during transcription; R-loops are composed of a DNA:RNA hybrid and the associated non-template single-stranded DNA. The polypeptide is Probable ATP-dependent RNA helicase DDX23 (Pongo abelii (Sumatran orangutan)).